The chain runs to 206 residues: Isochorismatase family protein 1A (206 aa).

Belongs to the isochorismatase family.

The polypeptide is Isochorismatase family protein 1A (Dictyostelium discoideum (Social amoeba)).